Here is a 232-residue protein sequence, read N- to C-terminus: DNA repair and recombination protein RadB (232 aa).

Belongs to the eukaryotic RecA-like protein family. RadB subfamily.

In terms of biological role, involved in DNA repair and in homologous recombination. May regulate the cleavage reactions of the branch-structured DNA. Has a very weak ATPase activity that is not stimulated by DNA. Binds DNA but does not promote DNA strands exchange. The chain is DNA repair and recombination protein RadB from Methanosphaera stadtmanae (strain ATCC 43021 / DSM 3091 / JCM 11832 / MCB-3).